We begin with the raw amino-acid sequence, 477 residues long: Nuclear receptor subfamily 6 group A member 1-A (477 aa).

A DNA-binding region (nuclear receptor) is located at residues 40-115 (QRSCLICGDR…MGMNRKAIRE (76 aa)). 2 consecutive NR C4-type zinc fingers follow at residues 43–63 (CLIC…CEGC) and 79–98 (CSRD…CQYC). Residues 147–187 (DEANMPEHTWGNNGDSDHSSPGNGVSDGNQPSPVSTLSSNR) are disordered. Residues 156 to 187 (WGNNGDSDHSSPGNGVSDGNQPSPVSTLSSNR) are compositionally biased toward polar residues. In terms of domain architecture, NR LBD spans 230-461 (QSHTLIGQLV…HSCKSSLSSY (232 aa)).

This sequence belongs to the nuclear hormone receptor family. NR6 subfamily. As to quaternary structure, homodimer. In terms of tissue distribution, expressed in germ cells, being predominant in previtellogenic oocytes in the ovary and in spermatocytes in the testis.

It localises to the nucleus. Functionally, probable orphan nuclear receptor. Binds to a response element containing repeats of the motif 5'-AGGTCA-3'. The sequence is that of Nuclear receptor subfamily 6 group A member 1-A from Danio rerio (Zebrafish).